Here is a 428-residue protein sequence, read N- to C-terminus: Nematode resistance protein-like HSPRO1 (428 aa).

Interacts with SNF4.

The protein resides in the cytoplasm. Functionally, positive regulator of basal resistance. The sequence is that of Nematode resistance protein-like HSPRO1 (HSPRO1) from Arabidopsis thaliana (Mouse-ear cress).